We begin with the raw amino-acid sequence, 165 residues long: Lipoprotein signal peptidase (165 aa).

Helical transmembrane passes span 11-31 (YWVLALAAIVLDQWSKWAVLS), 41-61 (VIPSFFDLTLVYNPGAAFSFL), 64-84 (QGGWQKYFFLVLAVAVSAYLV), and 92-112 (FATLGKTGAAMIIGGALGNVI). Residues Asp-122 and Asp-140 contribute to the active site. A helical membrane pass occupies residues 132 to 152 (FYPAFNIADSFICVGAVLAVL).

It belongs to the peptidase A8 family.

It localises to the cell inner membrane. It catalyses the reaction Release of signal peptides from bacterial membrane prolipoproteins. Hydrolyzes -Xaa-Yaa-Zaa-|-(S,diacylglyceryl)Cys-, in which Xaa is hydrophobic (preferably Leu), and Yaa (Ala or Ser) and Zaa (Gly or Ala) have small, neutral side chains.. It participates in protein modification; lipoprotein biosynthesis (signal peptide cleavage). In terms of biological role, this protein specifically catalyzes the removal of signal peptides from prolipoproteins. This chain is Lipoprotein signal peptidase, found in Neisseria meningitidis serogroup A / serotype 4A (strain DSM 15465 / Z2491).